The sequence spans 1840 residues: Collagen alpha-1(V) chain (1840 aa).

The signal sequence occupies residues Met1–Ala36. The Laminin G-like domain maps to Asp72 to Cys244. The nonhelical region stretch occupies residues Arg231–Glu445. Residues Tyr234, Tyr236, Tyr240, Tyr262, Tyr263, and Tyr271 each carry the sulfotyrosine modification. Disordered regions lie at residues Pro242–Met523, Phe528–Gln547, and Gly561–Gln1576. The segment covering Asn258–Gly268 has biased composition (acidic residues). Low complexity-rich tracts occupy residues Asp335–Asp352 and Thr376–Asn386. Positions Gly446 to Arg560 are interrupted collagenous region. Residues Pro472–Thr487 show a composition bias toward pro residues. Positions Leu508–Met523 are enriched in low complexity. A compositionally biased stretch (low complexity) spans Gly561–Pro572. Positions Gly561 to Gly1572 are triple-helical region. 3 positions are modified to 4-hydroxyproline: Pro572, Pro578, and Pro623. Lys629 bears the 5-hydroxylysine mark. Pro641 is subject to 4-hydroxyproline. Residue Lys644 is modified to 5-hydroxylysine. Pro650, Pro656, Pro659, Pro677, and Pro680 each carry 4-hydroxyproline. Over residues Pro673–Pro688 the composition is skewed to low complexity. Residues Pro682 and Pro688 each carry the 3-hydroxyproline modification. Residues Lys689–Pro698 show a composition bias toward pro residues. 4-hydroxyproline occurs at positions 692, 698, and 707. Lys710 is modified (5-hydroxylysine). 4-hydroxyproline is present on residues Pro719, Pro722, Pro728, and Pro734. Positions Gln724–Pro743 are enriched in low complexity. Lys746 is modified (5-hydroxylysine). Residues Leu749 to Pro758 are compositionally biased toward low complexity. 5 positions are modified to 4-hydroxyproline: Pro752, Pro758, Pro764, Pro767, and Pro773. Lys776 bears the 5-hydroxylysine mark. 2 positions are modified to 4-hydroxyproline: Pro782 and Pro791. Lys797, Lys806, Lys809, and Lys812 each carry 5-hydroxylysine. At Pro818 the chain carries 4-hydroxyproline. Lys821 is subject to 5-hydroxylysine. Residue Pro836 is modified to 4-hydroxyproline. Over residues Arg839–Lys848 the composition is skewed to basic and acidic residues. 5-hydroxylysine occurs at positions 848 and 866. A 4-hydroxyproline mark is found at Pro872, Pro875, and Pro878. The residue at position 884 (Lys884) is a 5-hydroxylysine. A 4-hydroxyproline mark is found at Pro890 and Pro893. Residue Lys899 is modified to 5-hydroxylysine. Pro905 and Pro908 each carry 4-hydroxyproline. Low complexity predominate over residues Pro910–Pro919. A 4-hydroxyproline mark is found at Pro932 and Pro947. Low complexity-rich tracts occupy residues Lys973–Thr992 and Val1001–Met1013. Residues Pro1019, Pro1022, Pro1025, and Pro1031 each carry the 4-hydroxyproline modification. Over residues Ser1090–Pro1106 the composition is skewed to low complexity. The segment covering Arg1108–Pro1117 has biased composition (pro residues). Pro1223 and Pro1226 each carry 4-hydroxyproline. Positions Pro1261–Pro1270 are enriched in low complexity. A compositionally biased stretch (gly residues) spans Gly1296–Gly1305. Composition is skewed to pro residues over residues Thr1382–Ala1400 and Ser1456–Leu1471. Residues Pro1469 and Pro1472 each carry the 4-hydroxyproline modification. Low complexity predominate over residues Pro1487–Pro1496. Over residues Pro1528–Pro1543 the composition is skewed to pro residues. Low complexity predominate over residues Lys1544–Lys1556. The interval Glu1573–Ala1607 is nonhelical region. Sulfotyrosine is present on residues Tyr1603 and Tyr1606. Residues Glu1611–Leu1839 enclose the Fibrillar collagen NC1 domain.

This sequence belongs to the fibrillar collagen family. As to quaternary structure, trimers of two alpha 1(V) and one alpha 2(V) chains in most tissues and trimers of one alpha 1(V), one alpha 2(V), and one alpha 3(V) chains in placenta. Interacts with CSPG4. Hydroxylation on proline residues within the sequence motif, GXPG, is most likely to be 4-hydroxy as this fits the requirement for 4-hydroxylation in vertebrates. Post-translationally, sulfated on 40% of tyrosines. Ubiquitously expressed.

It localises to the secreted. The protein resides in the extracellular space. The protein localises to the extracellular matrix. Functionally, type V collagen is a member of group I collagen (fibrillar forming collagen). It is a minor connective tissue component of nearly ubiquitous distribution. Type V collagen binds to DNA, heparan sulfate, thrombospondin, heparin, and insulin. The chain is Collagen alpha-1(V) chain (COL5A1) from Cricetulus longicaudatus (Long-tailed dwarf hamster).